The following is a 365-amino-acid chain: Zinc transporter 7 (365 aa).

The signal sequence occupies residues 1–26 (MAYSKACYKLTTITILLLSFTLPSLA). The Extracellular segment spans residues 27 to 56 (GNAENADVSECKAESGDLSCHNNKEAQKLK). A helical transmembrane segment spans residues 57–77 (IIAIPSILVASMIGVSLPLFS). At 78–90 (RSIPALGPDREMS) the chain is on the cytoplasmic side. Residues 91-111 (VIVKTLASGVILATGFMHVLP) form a helical membrane-spanning segment. At 112–129 (DSFDDLTSKCLPEDPWQK) the chain is on the extracellular side. The chain crosses the membrane as a helical span at residues 130–150 (FPFATFITMISALLVLMIESF). Over 151–210 (AMCAYARRTSKREGEVVPLENGSNSVDTQNDIQTLENGSSYVEKQEKVNEDKTSELLRNK) the chain is Cytoplasmic. The chain crosses the membrane as a helical span at residues 211–231 (VIAQILELGIVVHSVVIGLAM). Residues 232–242 (GASDNKCTVQS) lie on the Extracellular side of the membrane. A helical transmembrane segment spans residues 243–263 (LIAALCFHQLFEGMGLGGSIL). Topologically, residues 264-272 (QAQFKSKTN) are cytoplasmic. Residues 273–293 (WTMVFFFSVTTPFGIVLGMAI) form a helical membrane-spanning segment. At 294 to 304 (QKIYDETSPTA) the chain is on the extracellular side. Residues 305-325 (LIVVGVLNACSAGLLIYMALV) traverse the membrane as a helical segment. Residues 326–344 (NLLAHEFFGPKIQGNIKLH) lie on the Cytoplasmic side of the membrane. Residues 345 to 365 (VLGYVATFTGAAGMSLMAKWA) form a helical membrane-spanning segment.

The protein belongs to the ZIP transporter (TC 2.A.5) family.

The protein resides in the cell membrane. In terms of biological role, probably mediates zinc uptake from the rhizosphere. This chain is Zinc transporter 7 (ZIP7), found in Arabidopsis thaliana (Mouse-ear cress).